Here is a 727-residue protein sequence, read N- to C-terminus: Catalase-peroxidase (727 aa).

Residues 1–21 (MDAKVEDNIAGKCPMGHGRGP) are disordered. The segment at residues 95–217 (WHAAGTYRIT…LGAVQMGLIY (123 aa)) is a cross-link (tryptophyl-tyrosyl-methioninium (Trp-Tyr) (with M-243)). His-96 (proton acceptor) is an active-site residue. A cross-link (tryptophyl-tyrosyl-methioninium (Tyr-Met) (with W-95)) is located at residues 217–243 (YVNPEGPNGNPDPLASARDIRETFARM). His-258 lines the heme b pocket.

Belongs to the peroxidase family. Peroxidase/catalase subfamily. As to quaternary structure, homodimer or homotetramer. Heme b is required as a cofactor. In terms of processing, formation of the three residue Trp-Tyr-Met cross-link is important for the catalase, but not the peroxidase activity of the enzyme.

The enzyme catalyses H2O2 + AH2 = A + 2 H2O. It catalyses the reaction 2 H2O2 = O2 + 2 H2O. Bifunctional enzyme with both catalase and broad-spectrum peroxidase activity. Important for stationary phase survival. In Caulobacter vibrioides (strain ATCC 19089 / CIP 103742 / CB 15) (Caulobacter crescentus), this protein is Catalase-peroxidase.